Consider the following 100-residue polypeptide: Succinate dehydrogenase assembly factor 4, mitochondrial (100 aa).

Residues 1 to 31 (MFNRNLRAVILKNYNKALTRCLHDAGNLKRP) constitute a mitochondrion transit peptide. Positions 24–100 (DAGNLKRPTP…YSYEGRVTDF (77 aa)) are disordered. 2 stretches are compositionally biased toward basic and acidic residues: residues 36–68 (LPKE…KDFE) and 85–100 (PTVH…VTDF).

Belongs to the SDHAF4 family. In terms of assembly, interacts with sdh1 in its FAD-bound form.

The protein resides in the mitochondrion matrix. Its function is as follows. Plays an essential role in the assembly of succinate dehydrogenase (SDH), an enzyme complex (also referred to as respiratory complex II) that is a component of both the tricarboxylic acid (TCA) cycle and the mitochondrial electron transport chain, and which couples the oxidation of succinate to fumarate with the reduction of ubiquinone (coenzyme Q) to ubiquinol. Binds to the flavoprotein subunit sdh1 in its FAD-bound form, blocking the generation of excess reactive oxygen species (ROS) and facilitating its assembly with the iron-sulfur protein subunit sdh2 into the SDH catalytic dimer. The chain is Succinate dehydrogenase assembly factor 4, mitochondrial from Schizosaccharomyces pombe (strain 972 / ATCC 24843) (Fission yeast).